The primary structure comprises 170 residues: Adenine phosphoribosyltransferase (170 aa).

Belongs to the purine/pyrimidine phosphoribosyltransferase family. As to quaternary structure, homodimer.

It is found in the cytoplasm. It carries out the reaction AMP + diphosphate = 5-phospho-alpha-D-ribose 1-diphosphate + adenine. It participates in purine metabolism; AMP biosynthesis via salvage pathway; AMP from adenine: step 1/1. In terms of biological role, catalyzes a salvage reaction resulting in the formation of AMP, that is energically less costly than de novo synthesis. This chain is Adenine phosphoribosyltransferase, found in Bacillus subtilis (strain 168).